The following is a 313-amino-acid chain: MSTLGLPPAVFLMGPTASGKTALAVSLRSRFPFEIISVDSALVYRGMDVGTAKPDAATLARAPHHLLDIREPNETYSAAAFCDDARARMAAITARGRVPLLVGGTMLYFRALLQGLDDLPRADAALRKRLEQDAAERGWPALHAELAALDPATAARLAPNDSQRIGRALEIVELTGRPMSAQLAQTPRALPYDVLQLALVPSDRAALHRRIGERFDAMLEAGLVDEVEMLRRNHVLDSTMPAMRAVGYRQAWAYLDGDIDLEALREQGVAATRQLAKRQLTWLRSWPGAVTLDCLADDLESRAAALVAAHLGA.

An ATP-binding site is contributed by 14 to 21; it reads GPTASGKT. Residue 16 to 21 coordinates substrate; it reads TASGKT. Interaction with substrate tRNA regions lie at residues 39-42 and 163-167; these read DSAL and QRIGR.

This sequence belongs to the IPP transferase family. In terms of assembly, monomer. It depends on Mg(2+) as a cofactor.

It catalyses the reaction adenosine(37) in tRNA + dimethylallyl diphosphate = N(6)-dimethylallyladenosine(37) in tRNA + diphosphate. Functionally, catalyzes the transfer of a dimethylallyl group onto the adenine at position 37 in tRNAs that read codons beginning with uridine, leading to the formation of N6-(dimethylallyl)adenosine (i(6)A). In Thiobacillus denitrificans (strain ATCC 25259 / T1), this protein is tRNA dimethylallyltransferase.